The following is a 705-amino-acid chain: Polyribonucleotide nucleotidyltransferase (705 aa).

Mg(2+) is bound by residues Asp485 and Asp491. In terms of domain architecture, KH spans 552–611; it reads PKVFTMSINPSKIKDVIGAGGKTINKIIDETGVKIDIKEDGSVFVTAEDYESGKKALAMI. The region spanning 621-689 is the S1 motif domain; sequence GEVYLGKVTK…SMGRVNLSRK (69 aa).

It belongs to the polyribonucleotide nucleotidyltransferase family. Requires Mg(2+) as cofactor.

Its subcellular location is the cytoplasm. The enzyme catalyses RNA(n+1) + phosphate = RNA(n) + a ribonucleoside 5'-diphosphate. In terms of biological role, involved in mRNA degradation. Catalyzes the phosphorolysis of single-stranded polyribonucleotides processively in the 3'- to 5'-direction. In Clostridium novyi (strain NT), this protein is Polyribonucleotide nucleotidyltransferase.